The sequence spans 596 residues: (E)-beta-ocimene synthase, chloroplastic (596 aa).

Residues methionine 1–arginine 35 constitute a chloroplast transit peptide. Arginine 307, aspartate 344, aspartate 348, arginine 485, and asparagine 488 together coordinate (2E)-geranyl diphosphate. Aspartate 344 and aspartate 348 together coordinate Mg(2+). Positions aspartate 344–aspartate 348 match the DDXXD motif motif. Asparagine 488, alanine 492, and glutamate 496 together coordinate Mg(2+).

It belongs to the terpene synthase family. Tpsb subfamily. Requires Mg(2+) as cofactor. It depends on Mn(2+) as a cofactor. In terms of tissue distribution, highly expressed in leaves, stems and disk florets. Detected in roots.

Its subcellular location is the plastid. It is found in the chloroplast. The catalysed reaction is (2E)-geranyl diphosphate = (E)-beta-ocimene + diphosphate. The protein operates within secondary metabolite biosynthesis; terpenoid biosynthesis. In terms of biological role, monoterpene synthase involved in the biosynthesis of (E)-beta-ocimene as the major product and trace amounts of (Z)-beta-ocimene. Can only accept geranyl diphosphate as substrate. In Matricaria chamomilla var. recutita (German chamomile), this protein is (E)-beta-ocimene synthase, chloroplastic.